The sequence spans 185 residues: Dehydrin ERD14 (185 aa).

4 stretches are compositionally biased toward basic and acidic residues: residues 1 to 13 (MAEEIKNVPEQEV), 25 to 45 (VTDRGLFDFLGKKKDETKPEE), 52 to 78 (FEQKVHISEPEPEVKHESLLEKLHRSD), and 103 to 134 (KPTTEVEVKEEEKKGFMEKLKEKLPGHKKPED). Disordered regions lie at residues 1-138 (MAEE…GSAV) and 166-185 (EKLPGYHPKTTVEEEKKDKE). At Ala2 the chain carries N-acetylalanine. A Phosphoserine modification is found at Ser59. Repeat copies occupy residues 112-132 (EEEKKGFMEKLKEKLPGHKKP) and 154-174 (PVEKKGILEKIKEKLPGYHPK). The 2 X 21 AA repeats, Lys-rich stretch occupies residues 112–174 (EEEKKGFMEK…KEKLPGYHPK (63 aa)).

This sequence belongs to the plant dehydrin family. In stems, cauline leaves, roots and flowers. Low levels found in maturing seeds. Absent in dry seeds.

Functionally, intrinsically disordered protein acting as a chaperone. Prevents heat-induced aggregation and/or inactivation of various substrates. Binds to acidic phospholipid vesicles without affecting membrane fluidity. The chain is Dehydrin ERD14 (ERD14) from Arabidopsis thaliana (Mouse-ear cress).